We begin with the raw amino-acid sequence, 214 residues long: Orotate phosphoribosyltransferase (214 aa).

Residue K26 participates in 5-phospho-alpha-D-ribose 1-diphosphate binding. F34–F35 is a binding site for orotate. Residues Y72–K73, R99, K100, K103, H105, and D124–A132 contribute to the 5-phospho-alpha-D-ribose 1-diphosphate site. Orotate is bound by residues T128 and R156.

It belongs to the purine/pyrimidine phosphoribosyltransferase family. PyrE subfamily. In terms of assembly, homodimer. Mg(2+) is required as a cofactor.

It carries out the reaction orotidine 5'-phosphate + diphosphate = orotate + 5-phospho-alpha-D-ribose 1-diphosphate. It functions in the pathway pyrimidine metabolism; UMP biosynthesis via de novo pathway; UMP from orotate: step 1/2. Its function is as follows. Catalyzes the transfer of a ribosyl phosphate group from 5-phosphoribose 1-diphosphate to orotate, leading to the formation of orotidine monophosphate (OMP). This is Orotate phosphoribosyltransferase from Actinobacillus succinogenes (strain ATCC 55618 / DSM 22257 / CCUG 43843 / 130Z).